The chain runs to 509 residues: UDP-N-acetylmuramyl-tripeptide synthetase (509 aa).

Residue 124–130 (GTNGKTS) participates in ATP binding. UDP-N-acetyl-alpha-D-muramoyl-L-alanyl-D-glutamate-binding positions include 164–165 (TT), serine 191, and arginine 199. Lysine 231 carries the N6-carboxylysine modification.

Belongs to the MurCDEF family. MurE subfamily. Post-translationally, carboxylation is probably crucial for Mg(2+) binding and, consequently, for the gamma-phosphate positioning of ATP.

It is found in the cytoplasm. It functions in the pathway cell wall biogenesis; peptidoglycan biosynthesis. In terms of biological role, catalyzes the addition of an amino acid to the nucleotide precursor UDP-N-acetylmuramoyl-L-alanyl-D-glutamate (UMAG) in the biosynthesis of bacterial cell-wall peptidoglycan. The sequence is that of UDP-N-acetylmuramyl-tripeptide synthetase from Tropheryma whipplei (strain TW08/27) (Whipple's bacillus).